The primary structure comprises 227 residues: GTP:AMP phosphotransferase AK3, mitochondrial (227 aa).

GTP-binding residues include Gly-17, Gly-19, Lys-20, Gly-21, and Thr-22. The residue at position 20 (Lys-20) is an N6-succinyllysine. At Lys-29 the chain carries N6-acetyllysine; alternate. Lys-29 is modified (N6-succinyllysine; alternate). Position 34 is an N6-acetyllysine (Lys-34). Ser-37 carries the phosphoserine modification. The NMP stretch occupies residues 37–66 (SSGDLLRQNMLQGTEIAVLAKSFIDQGKLI). AMP is bound by residues Ser-38 and Arg-43. Lys-57 bears the N6-succinyllysine mark. N6-acetyllysine; alternate is present on residues Lys-64 and Lys-80. N6-succinyllysine; alternate occurs at positions 64 and 80. Lys-64 contributes to the AMP binding site. AMP-binding residues include Gly-91, Arg-94, and Gln-98. An LID region spans residues 127 to 164 (ARWIHPASGRVYNIEFNPPKTVGIDDLTGEPLIQREDD). 5 residues coordinate GTP: Arg-128, Tyr-138, Asn-139, Arg-161, and Arg-172. N6-acetyllysine; alternate is present on residues Lys-174 and Lys-189. Lys-174 and Lys-189 each carry N6-succinyllysine; alternate. A GTP-binding site is contributed by Thr-201. Position 203 is an N6-acetyllysine (Lys-203).

This sequence belongs to the adenylate kinase family. AK3 subfamily. As to quaternary structure, monomer.

It is found in the mitochondrion matrix. The catalysed reaction is a ribonucleoside 5'-triphosphate + AMP = a ribonucleoside 5'-diphosphate + ADP. The enzyme catalyses GTP + AMP = GDP + ADP. It carries out the reaction ITP + AMP = IDP + ADP. Mitochondrial adenylate kinase with a specific GTP:AMP phosphotransferase activity. Could also use ITP as phosphate donor. Its physiological function is to recycle GTP into GDP which is necessary for the TCA cycle in the mitochondrial matrix. The protein is GTP:AMP phosphotransferase AK3, mitochondrial of Rattus norvegicus (Rat).